A 259-amino-acid polypeptide reads, in one-letter code: O-antigen export system permease protein RfbA (259 aa).

The next 6 helical transmembrane spans lie at 33–53 (LGYL…YFIF), 73–95 (FPWQ…NAQI), 111–131 (VMME…FLFV), 142–162 (WGIP…SIIF), 176–196 (VSLG…SDMI), and 228–248 (EYIS…LSIF). One can recognise an ABC transmembrane type-2 domain in the interval 33–251 (LGYLWSVANP…VVGLSIFNKL (219 aa)).

It belongs to the ABC-2 integral membrane protein family.

The protein resides in the cell inner membrane. May form an ATP-driven O-antigen export apparatus, in association with RfbB. The polypeptide is O-antigen export system permease protein RfbA (rfbA) (Klebsiella pneumoniae).